Here is a 199-residue protein sequence, read N- to C-terminus: Oleosin 21.2 kDa (199 aa).

Positions 1–14 are enriched in basic and acidic residues; it reads MADTHRVDRTDRHF. Positions 1-31 are disordered; the sequence is MADTHRVDRTDRHFQFQSPYEGGRGQGQYEG. Ala2 is subject to N-acetylalanine. A polar region spans residues 2–56; the sequence is ADTHRVDRTDRHFQFQSPYEGGRGQGQYEGDRGYGGGGYKSMMPESGPSSTQVLS. The span at 22–31 shows a compositional bias: gly residues; sequence GGRGQGQYEG. The next 3 helical transmembrane spans lie at 51–71, 72–92, and 96–116; these read STQVLSLLIGVPVVGSLLALA, GLLLAGSVIGLMVALPLFLLF, and IVPAALTIGLAMTGFLASGMF. The interval 57-128 is hydrophobic; that stretch reads LLIGVPVVGS…TGLSSISWVM (72 aa). The segment at 159-199 is disordered; that stretch reads KGKEMGQHVQNKAQDVKQYDISKPHDTTTKGHETQGRTTAA. Over residues 172–193 the composition is skewed to basic and acidic residues; that stretch reads QDVKQYDISKPHDTTTKGHETQ.

Belongs to the oleosin family.

Its subcellular location is the lipid droplet. The protein localises to the membrane. In terms of biological role, may have a structural role to stabilize the lipid body during desiccation of the seed by preventing coalescence of the oil. Probably interacts with both lipid and phospholipid moieties of lipid bodies. May also provide recognition signals for specific lipase anchorage in lipolysis during seedling growth. This is Oleosin 21.2 kDa from Arabidopsis thaliana (Mouse-ear cress).